The sequence spans 200 residues: Trem-like transcript 4 protein (200 aa).

Residues 1–25 form the signal peptide; it reads MAWGGVHTCCFHLCCCCSWPQGAVP. One can recognise an Ig-like V-type domain in the interval 26-126; it reads EELHKHPGQT…NIITVLRNIS (101 aa). Cys-40 and Cys-109 form a disulfide bridge. N-linked (GlcNAc...) asparagine glycosylation is present at Asn-93.

The protein resides in the secreted. Positively regulates Toll-like receptor TLR7 signaling in macrophages. The sequence is that of Trem-like transcript 4 protein (TREML4) from Homo sapiens (Human).